We begin with the raw amino-acid sequence, 467 residues long: Probable protein phosphatase 2C 55 (467 aa).

The PPM-type phosphatase domain occupies 222-458 (SCYLPHPDKE…DDITVVVSYV (237 aa)). 4 residues coordinate Mn(2+): Asp252, Gly253, Asp383, and Asp449.

This sequence belongs to the PP2C family. The cofactor is Mg(2+). Mn(2+) is required as a cofactor.

The enzyme catalyses O-phospho-L-seryl-[protein] + H2O = L-seryl-[protein] + phosphate. The catalysed reaction is O-phospho-L-threonyl-[protein] + H2O = L-threonyl-[protein] + phosphate. In Arabidopsis thaliana (Mouse-ear cress), this protein is Probable protein phosphatase 2C 55.